We begin with the raw amino-acid sequence, 372 residues long: Probable arabinan endo-1,5-alpha-L-arabinosidase B (372 aa).

The N-terminal stretch at 1–16 (MTVLVALFCLVTWTLC) is a signal peptide. The segment covering 23-34 (STQGTQQPQQPE) has biased composition (low complexity). The interval 23–52 (STQGTQQPQQPEKTPHPHPQPEDAFPPTHA) is disordered. Asp59 functions as the Proton acceptor in the catalytic mechanism. N-linked (GlcNAc...) asparagine glycosylation occurs at Asn120. Glu252 functions as the Proton donor in the catalytic mechanism. Asn363 carries N-linked (GlcNAc...) asparagine glycosylation.

Belongs to the glycosyl hydrolase 43 family.

Its subcellular location is the secreted. It catalyses the reaction Endohydrolysis of (1-&gt;5)-alpha-arabinofuranosidic linkages in (1-&gt;5)-arabinans.. It functions in the pathway glycan metabolism; L-arabinan degradation. In terms of biological role, endo-1,5-alpha-L-arabinanase involved in degradation of pectin. Its preferred substrate is linear 1,5-alpha-L-arabinan. The chain is Probable arabinan endo-1,5-alpha-L-arabinosidase B (abnB) from Aspergillus fumigatus (strain CBS 144.89 / FGSC A1163 / CEA10) (Neosartorya fumigata).